We begin with the raw amino-acid sequence, 251 residues long: MEMKQISETTLKITISMEDLEDRGMELKDFLIPQEKTEEFFYSVMDELDLPENFKNSGMLSFRVTPKKDRIDVFVTKSELSKDLNLEELADLGDISKMSPEDFFKTLEQSMLEKGDTDAHAKLAEIENMMDKATQEVVEENVSEEQAEKEVETIGYVHYVFDFDNIEAVVRFSQTIDFPIEASELYKNGKGYHMTILLDLENQPSYFANLMYARMLEHANVGTKTRAYLKEHSIQLIHDDAISKLQMIEMG.

Belongs to the MecA family. As to quaternary structure, homodimer.

Enables the recognition and targeting of unfolded and aggregated proteins to the ClpC protease or to other proteins involved in proteolysis. This chain is Adapter protein MecA, found in Streptococcus agalactiae serotype Ia (strain ATCC 27591 / A909 / CDC SS700).